A 163-amino-acid polypeptide reads, in one-letter code: Nuclear cap-binding protein subunit 2 (163 aa).

Residues Tyr18, Tyr41, 110–114 (RVDWD), 121–125 (RQYGR), and 131–132 (QV) each bind mRNA. An RRM domain is found at 38 to 116 (STLYVGNLSF…RIVRVDWDAG (79 aa)).

This sequence belongs to the RRM NCBP2 family. Component of the nuclear cap-binding complex (CBC), a heterodimer composed of Cbp80 and Cbp20 that interacts with m7GpppG-capped RNA.

It localises to the nucleus. Component of the cap-binding complex (CBC), which binds co-transcriptionally to the 5' cap of pre-mRNAs and is involved in various processes such as pre-mRNA splicing and RNA-mediated gene silencing (RNAi). The CBC complex is involved in miRNA-mediated RNA interference and is required for primary microRNAs (miRNAs) processing. Also involved in innate immunity via the short interfering RNAs (siRNAs) processing machinery by restricting the viral RNA production. In the CBC complex, Cbp20 recognizes and binds capped RNAs (m7GpppG-capped RNA) but requires Cbp80 to stabilize the movement of its N-terminal loop and lock the CBC into a high affinity cap-binding state with the cap structure. The polypeptide is Nuclear cap-binding protein subunit 2 (Cbp20) (Anopheles gambiae (African malaria mosquito)).